A 427-amino-acid chain; its full sequence is mRNA cap guanine-N(7) methyltransferase (427 aa).

Residues 1-79 (MSLNYEQNAA…EPETEAASGA (79 aa)) are disordered. Phosphoserine occurs at positions 22, 24, 29, 46, and 48. A compositionally biased stretch (basic and acidic residues) spans 44–57 (HVSKSPREYYDEPG). Residues 103-411 (SKIFFMRNFN…LYLVCAFKKC (309 aa)) enclose the mRNA cap 0 methyltransferase domain. Residue 112-113 (NN) coordinates mRNA. S-adenosyl-L-methionine-binding residues include Lys116, Cys143, Asp165, Asp202, Gln225, and Tyr230.

This sequence belongs to the class I-like SAM-binding methyltransferase superfamily. mRNA cap 0 methyltransferase family.

It localises to the nucleus. It catalyses the reaction a 5'-end (5'-triphosphoguanosine)-ribonucleoside in mRNA + S-adenosyl-L-methionine = a 5'-end (N(7)-methyl 5'-triphosphoguanosine)-ribonucleoside in mRNA + S-adenosyl-L-homocysteine. In terms of biological role, mRNA-capping methyltransferase that methylates the N7 position of the added guanosine to the 5'-cap structure of mRNAs. Binds RNA containing 5'-terminal GpppC. This chain is mRNA cap guanine-N(7) methyltransferase, found in Drosophila melanogaster (Fruit fly).